A 448-amino-acid chain; its full sequence is uncharacterized protein (448 aa).

Residues 19 to 41 traverse the membrane as a helical segment; it reads LGLLVPFLLLLFSCTNTVGYGVL. Residues 105-181 form the SH3b domain; sequence YSYATSVLDG…CFSHGLSLFD (77 aa).

Its subcellular location is the membrane. This is an uncharacterized protein from Treponema pallidum (strain Nichols).